Here is a 254-residue protein sequence, read N- to C-terminus: Flavin-dependent thymidylate synthase (254 aa).

Positions 7 to 237 (LRVQLIARTE…PAVFADFEIY (231 aa)) constitute a ThyX domain. FAD-binding positions include Ser71, 95-97 (RHR), and Gln103. DUMP contacts are provided by residues 92–95 (ELIR), 103–107 (QLSQR), and Arg176. Positions 95–105 (RHRHFSYSQLS) match the ThyX motif motif. FAD contacts are provided by residues 192–194 (NYR) and His198. Residue Arg203 participates in dUMP binding. The active-site Involved in ionization of N3 of dUMP, leading to its activation is the Arg203.

This sequence belongs to the thymidylate synthase ThyX family. Homotetramer. It depends on FAD as a cofactor.

It catalyses the reaction dUMP + (6R)-5,10-methylene-5,6,7,8-tetrahydrofolate + NADPH + H(+) = dTMP + (6S)-5,6,7,8-tetrahydrofolate + NADP(+). It participates in pyrimidine metabolism; dTTP biosynthesis. Its function is as follows. Catalyzes the reductive methylation of 2'-deoxyuridine-5'-monophosphate (dUMP) to 2'-deoxythymidine-5'-monophosphate (dTMP) while utilizing 5,10-methylenetetrahydrofolate (mTHF) as the methyl donor, and NADPH and FADH(2) as the reductant. This Mycobacterium sp. (strain JLS) protein is Flavin-dependent thymidylate synthase.